The chain runs to 1483 residues: Neuropathy target esterase sws (1483 aa).

At 1–34 (MDVLELLRASANGCYNTLFSDAWFQYVSKQIATT) the chain is on the lumenal side. Residues 35-55 (MYWYGALLVIGVLFIAWFLYF) form a helical membrane-spanning segment. Over 56 to 1483 (KRLARLRLRD…ENLTKTDTKN (1428 aa)) the chain is Cytoplasmic. 174-301 (IFGHFEKPIF…IRVIQVIMIR (128 aa)) lines the a nucleoside 3',5'-cyclic phosphate pocket. Disordered regions lie at residues 348–380 (ASRPVVRAPTSPNSRLSREEHTLSDPDPNPNAN) and 404–440 (SSAVSVNQAGTRRSSTTYGPSGESPNGNANTAPGTSI). The segment covering 413-440 (GTRRSSTTYGPSGESPNGNANTAPGTSI) has biased composition (polar residues). S418 and S424 each carry phosphoserine. A nucleoside 3',5'-cyclic phosphate contacts are provided by residues 456-585 (ELGL…VVRR) and 574-701 (IVLD…LSHR). The PNPLA domain occupies 927 to 1093 (LVLGGGGARG…VNNLPGHLWR (167 aa)). The GXGXXG signature appears at 931–936 (GGGARG). Positions 958–962 (GVSIG) match the GXSXG motif. S960 acts as the Nucleophile in catalysis. The active-site Proton acceptor is the D1080. Residues 1080–1082 (DGG) carry the DGA/G motif. S1174 carries the post-translational modification Phosphoserine. The tract at residues 1349–1483 (DKATQSTPPT…ENLTKTDTKN (135 aa)) is disordered. Residues 1351–1373 (ATQSTPPTPNKQHALSPTSSQTN) are compositionally biased toward polar residues. Residues 1382–1396 (KPKEKQPSYDKLDRE) show a composition bias toward basic and acidic residues. Low complexity predominate over residues 1410-1419 (ERSSMQQRDS). Over residues 1445 to 1458 (LNKPEQQPEQKPVP) the composition is skewed to basic and acidic residues. Positions 1465–1474 (QKQQDQQQQE) are enriched in low complexity.

This sequence belongs to the NTE family. In terms of assembly, interacts with Pka-C3; interaction inhibits the catalytic function of Pka-C3 and the esterase activity of sws.

The protein resides in the endoplasmic reticulum membrane. It carries out the reaction a 1-acyl-sn-glycero-3-phosphocholine + H2O = sn-glycerol 3-phosphocholine + a fatty acid + H(+). In terms of biological role, phospholipase B that deacylates intracellular phosphatidylcholine (PtdCho), generating glycerophosphocholine (GroPtdCho). This deacylation occurs at both sn-2 and sn-1 positions of PtdCho. Its specific chemical modification by certain organophosphorus (OP) compounds leads to distal axonopathy. Plays a role in the signaling mechanism between neurons and glia that regulates glia wrapping during development of the adult brain. Essential for membrane lipid homeostasis and cell survival in both neurons and glia of the adult brain. The protein is Neuropathy target esterase sws of Drosophila virilis (Fruit fly).